Consider the following 276-residue polypeptide: Undecaprenyl-diphosphatase (276 aa).

The next 8 helical transmembrane spans lie at 1-21, 39-59, 84-104, 115-135, 159-179, 190-210, 222-242, and 253-273; these read MSWL…FLPV, AGAS…LVYF, YRLG…GLLL, LWAI…AEYF, LALL…LFLG, FLLA…DAFA, QLLV…AWFL, and FVGY…TGVV.

Belongs to the UppP family.

The protein resides in the cell membrane. It catalyses the reaction di-trans,octa-cis-undecaprenyl diphosphate + H2O = di-trans,octa-cis-undecaprenyl phosphate + phosphate + H(+). Its function is as follows. Catalyzes the dephosphorylation of undecaprenyl diphosphate (UPP). Confers resistance to bacitracin. The polypeptide is Undecaprenyl-diphosphatase (Mycobacterium sp. (strain KMS)).